The sequence spans 395 residues: Ribosomal RNA large subunit methyltransferase I (395 aa).

Residues 2-79 enclose the PUA domain; it reads SSRVTLHPGR…QNESVDNGFF (78 aa).

It belongs to the methyltransferase superfamily. RlmI family.

Its subcellular location is the cytoplasm. It carries out the reaction cytidine(1962) in 23S rRNA + S-adenosyl-L-methionine = 5-methylcytidine(1962) in 23S rRNA + S-adenosyl-L-homocysteine + H(+). Functionally, specifically methylates the cytosine at position 1962 (m5C1962) of 23S rRNA. The polypeptide is Ribosomal RNA large subunit methyltransferase I (Pseudoalteromonas atlantica (strain T6c / ATCC BAA-1087)).